The chain runs to 106 residues: Large ribosomal subunit protein bL21 (106 aa).

The protein belongs to the bacterial ribosomal protein bL21 family. Part of the 50S ribosomal subunit. Contacts protein L20.

Functionally, this protein binds to 23S rRNA in the presence of protein L20. The chain is Large ribosomal subunit protein bL21 from Chlamydia pneumoniae (Chlamydophila pneumoniae).